A 1216-amino-acid chain; its full sequence is RAB11-binding protein RELCH (1216 aa).

Residues 1–13 are compositionally biased toward gly residues; sequence MAAMAPGGGGSGS. Disordered regions lie at residues 1–67 and 133–179; these read MAAM…GSSA and NPGN…NRAG. A2 bears the N-acetylalanine mark. Residues S20 and S22 each carry the phosphoserine modification. Residues 21-31 show a composition bias toward acidic residues; sequence DSDEDDDEVAA. At T32 the chain carries Phosphothreonine. S54 and S56 each carry phosphoserine. Over residues 142–154 the composition is skewed to low complexity; sequence GTPPGMGAPGIPG. Phosphoserine occurs at positions 180 and 182. Position 183 is a phosphothreonine (T183). S186 bears the Phosphoserine mark. A coiled-coil region spans residues 197-231; that stretch reads NRETDERVAVLEFELRKAKETIQALRANLTKAAEH. Residues 255–287 form the LisH domain; the sequence is EKRALNFLVNEFLLKNNYKLTSITFSDENDDQD. Residues 358 to 397 are a coiled coil; that stretch reads LVQKLEDKISLLNNEKWSLMEQIRRLESEMDILKAEHFAT. A Phosphoserine modification is found at S385. Residues 409 to 473 are disordered; it reads VWSSQKDSED…ELPPSSVSNK (65 aa). Positions 429 to 440 are enriched in basic and acidic residues; the sequence is DQEKTKDVHLEI. S453 is modified (phosphoserine). Residues 497 to 779 are interaction with RAB11A and RAB11B; it reads CRMSADSRLG…SSKAKLHGEV (283 aa). 2 HEAT repeats span residues 601–639 and 640–679; these read LLPQ…RSSL and VLSM…KYQQ. The residue at position 792 (S792) is a Phosphoserine. The HEAT 3 repeat unit spans residues 1004–1042; the sequence is VVPALITLSSDPEISVRIATIPAFGTIMETVIQRELLER. S1149 is modified (phosphoserine).

As to quaternary structure, interacts with RAB11A (VIA-GTP form). Interacts with RAB11B. Interacts (via the third HEAT repeat) with OSBP (via C-terminus). Found in a complex composed of RELCH, OSBP1 and RAB11A.

Its subcellular location is the recycling endosome. It is found in the golgi apparatus. The protein resides in the trans-Golgi network. Regulates intracellular cholesterol distribution from recycling endosomes to the trans-Golgi network through interactions with RAB11 and OSBP. Functions in membrane tethering and promotes OSBP-mediated cholesterol transfer between RAB11-bound recycling endosomes and OSBP-bound Golgi-like membranes. The polypeptide is RAB11-binding protein RELCH (Relch) (Mus musculus (Mouse)).